The following is a 319-amino-acid chain: MKKIAVLTSGGDAPGMNAAVRAVVRYGIKNGLEVIGVRRGYSGLIDGDFVKLEYKDVAGITEKGGTILRTSRCEEFKTEEGREAAAKQLKKHGIEGLVVIGGEGSLTGAHLLHEEHNIPVVGIPATIDNDIGLTDMCIGVDTCLNTVMDAIQKLKDTASSHERAFIVEVMGRHSGYIALMAGLVTGAEAIIIPEIPVDYSQLADRILQERRRGKINSIIVVAEGAASAYTVARHLEYRIGYETRITILGHVQRGGSPTAFDRRLALSMGVEAVEALLDGEADVMIALQGNKFVRVPIMEALSTKKTIDKKLYEIAHLLS.

Gly-11 contributes to the ATP binding site. ADP is bound at residue 21 to 25 (RAVVR). ATP contacts are provided by residues 72-73 (RC) and 102-105 (GEGS). Glu-103 contacts Mg(2+). 126-128 (TID) contacts substrate. Asp-128 functions as the Proton acceptor in the catalytic mechanism. Position 155 (Lys-155) interacts with ADP. Substrate-binding positions include Arg-163 and 170–172 (MGR). ADP contacts are provided by residues 186 to 188 (GAE), Arg-212, and 214 to 216 (KIN). Residues Glu-223, Arg-244, and 250 to 253 (HVQR) contribute to the substrate site.

Belongs to the phosphofructokinase type A (PFKA) family. ATP-dependent PFK group I subfamily. Prokaryotic clade 'B1' sub-subfamily. Homotetramer. The cofactor is Mg(2+).

The protein localises to the cytoplasm. The catalysed reaction is beta-D-fructose 6-phosphate + ATP = beta-D-fructose 1,6-bisphosphate + ADP + H(+). The protein operates within carbohydrate degradation; glycolysis; D-glyceraldehyde 3-phosphate and glycerone phosphate from D-glucose: step 3/4. Its activity is regulated as follows. Allosterically activated by ADP and other diphosphonucleosides, and allosterically inhibited by phosphoenolpyruvate. Catalyzes the phosphorylation of D-fructose 6-phosphate to fructose 1,6-bisphosphate by ATP, the first committing step of glycolysis. The protein is ATP-dependent 6-phosphofructokinase of Thermotoga neapolitana (strain ATCC 49049 / DSM 4359 / NBRC 107923 / NS-E).